We begin with the raw amino-acid sequence, 304 residues long: ATP phosphoribosyltransferase (304 aa).

It belongs to the ATP phosphoribosyltransferase family. Long subfamily. Mg(2+) serves as cofactor.

The protein localises to the cytoplasm. It carries out the reaction 1-(5-phospho-beta-D-ribosyl)-ATP + diphosphate = 5-phospho-alpha-D-ribose 1-diphosphate + ATP. It functions in the pathway amino-acid biosynthesis; L-histidine biosynthesis; L-histidine from 5-phospho-alpha-D-ribose 1-diphosphate: step 1/9. Its activity is regulated as follows. Feedback inhibited by histidine. Catalyzes the condensation of ATP and 5-phosphoribose 1-diphosphate to form N'-(5'-phosphoribosyl)-ATP (PR-ATP). Has a crucial role in the pathway because the rate of histidine biosynthesis seems to be controlled primarily by regulation of HisG enzymatic activity. The polypeptide is ATP phosphoribosyltransferase (Xylella fastidiosa (strain 9a5c)).